The sequence spans 699 residues: Elongation factor G (699 aa).

A tr-type G domain is found at 8 to 283; it reads EQIRNIGICA…AIVDFLPSPI (276 aa). GTP contacts are provided by residues 17-24, 81-85, and 135-138; these read AHIDAGKT, DTPGH, and NKMD.

This sequence belongs to the TRAFAC class translation factor GTPase superfamily. Classic translation factor GTPase family. EF-G/EF-2 subfamily.

It is found in the cytoplasm. Functionally, catalyzes the GTP-dependent ribosomal translocation step during translation elongation. During this step, the ribosome changes from the pre-translocational (PRE) to the post-translocational (POST) state as the newly formed A-site-bound peptidyl-tRNA and P-site-bound deacylated tRNA move to the P and E sites, respectively. Catalyzes the coordinated movement of the two tRNA molecules, the mRNA and conformational changes in the ribosome. The polypeptide is Elongation factor G (fusA) (Rickettsia prowazekii (strain Madrid E)).